A 270-amino-acid polypeptide reads, in one-letter code: 4-hydroxy-tetrahydrodipicolinate reductase (270 aa).

NAD(+)-binding positions include glycine 9–methionine 14 and glutamate 35. Residue arginine 36 coordinates NADP(+). NAD(+) contacts are provided by residues glycine 99–threonine 101 and alanine 123–phenylalanine 126. Histidine 156 serves as the catalytic Proton donor/acceptor. Histidine 157 provides a ligand contact to (S)-2,3,4,5-tetrahydrodipicolinate. Residue lysine 160 is the Proton donor of the active site. Glycine 166–threonine 167 is a (S)-2,3,4,5-tetrahydrodipicolinate binding site.

Belongs to the DapB family.

The protein localises to the cytoplasm. It carries out the reaction (S)-2,3,4,5-tetrahydrodipicolinate + NAD(+) + H2O = (2S,4S)-4-hydroxy-2,3,4,5-tetrahydrodipicolinate + NADH + H(+). It catalyses the reaction (S)-2,3,4,5-tetrahydrodipicolinate + NADP(+) + H2O = (2S,4S)-4-hydroxy-2,3,4,5-tetrahydrodipicolinate + NADPH + H(+). Its pathway is amino-acid biosynthesis; L-lysine biosynthesis via DAP pathway; (S)-tetrahydrodipicolinate from L-aspartate: step 4/4. Functionally, catalyzes the conversion of 4-hydroxy-tetrahydrodipicolinate (HTPA) to tetrahydrodipicolinate. In Haemophilus influenzae (strain PittEE), this protein is 4-hydroxy-tetrahydrodipicolinate reductase.